A 224-amino-acid chain; its full sequence is Protein FMP52, mitochondrial (224 aa).

It belongs to the FMP52 family.

The protein localises to the mitochondrion outer membrane. In Kluyveromyces lactis (strain ATCC 8585 / CBS 2359 / DSM 70799 / NBRC 1267 / NRRL Y-1140 / WM37) (Yeast), this protein is Protein FMP52, mitochondrial (FMP52).